The chain runs to 347 residues: 4-hydroxy-tetrahydrodipicolinate reductase 1, chloroplastic (347 aa).

The transit peptide at 1 to 51 (MATNGLMASSSVFLHRPRIAFASRTNQTVGKYGKGRVSFMGIGTRRLPVVL) directs the protein to the chloroplast. N-acetylserine is present on S52. Residues 79-84 (GCSGKM), 171-173 (GTT), and 194-197 (SPQM) each bind NAD(+). The Proton donor/acceptor role is filled by H230. K234 (proton donor) is an active-site residue. 239–240 (GT) provides a ligand contact to (S)-2,3,4,5-tetrahydrodipicolinate.

Belongs to the DapB family.

The protein resides in the plastid. Its subcellular location is the chloroplast. The enzyme catalyses (S)-2,3,4,5-tetrahydrodipicolinate + NAD(+) + H2O = (2S,4S)-4-hydroxy-2,3,4,5-tetrahydrodipicolinate + NADH + H(+). It carries out the reaction (S)-2,3,4,5-tetrahydrodipicolinate + NADP(+) + H2O = (2S,4S)-4-hydroxy-2,3,4,5-tetrahydrodipicolinate + NADPH + H(+). The protein operates within amino-acid biosynthesis; L-lysine biosynthesis via DAP pathway; (S)-tetrahydrodipicolinate from L-aspartate: step 4/4. Catalyzes the conversion of 4-hydroxy-tetrahydrodipicolinate (HTPA) to tetrahydrodipicolinate. The sequence is that of 4-hydroxy-tetrahydrodipicolinate reductase 1, chloroplastic (DAPB1) from Arabidopsis thaliana (Mouse-ear cress).